A 259-amino-acid polypeptide reads, in one-letter code: 1,2-dihydroxy-1,2-dihydronaphthalene dehydrogenase (259 aa).

8–32 contacts NAD(+); sequence SITGAGSGIGLELVRSFKSAGYYVS. Serine 140 serves as a coordination point for substrate. Tyrosine 153 serves as the catalytic Proton acceptor.

Belongs to the short-chain dehydrogenases/reductases (SDR) family.

It carries out the reaction (1R,2S)-1,2-dihydronaphthalene-1,2-diol + NAD(+) = naphthalene-1,2-diol + NADH + H(+). It catalyses the reaction cis-1,2-dihydroxy-1,2-dihydrodibenzothiophene + NAD(+) = 1,2-dihydroxydibenzothiophene + NADH + H(+). The protein operates within aromatic compound metabolism; naphthalene degradation. In terms of biological role, catalyzes the oxidation of naphthalene dihydrodiol into 1,2-dihydroxynaphthalene. In Pseudomonas putida (Arthrobacter siderocapsulatus), this protein is 1,2-dihydroxy-1,2-dihydronaphthalene dehydrogenase (nahB).